A 427-amino-acid chain; its full sequence is Serine--tRNA ligase (427 aa).

Residue 228–230 (TSE) participates in L-serine binding. ATP is bound at residue 259–261 (RSE). Residue Glu282 participates in L-serine binding. Position 346 to 349 (346 to 349 (EISS)) interacts with ATP. Residue Ser384 coordinates L-serine.

Belongs to the class-II aminoacyl-tRNA synthetase family. Type-1 seryl-tRNA synthetase subfamily. Homodimer. The tRNA molecule binds across the dimer.

It localises to the cytoplasm. The enzyme catalyses tRNA(Ser) + L-serine + ATP = L-seryl-tRNA(Ser) + AMP + diphosphate + H(+). It carries out the reaction tRNA(Sec) + L-serine + ATP = L-seryl-tRNA(Sec) + AMP + diphosphate + H(+). Its pathway is aminoacyl-tRNA biosynthesis; selenocysteinyl-tRNA(Sec) biosynthesis; L-seryl-tRNA(Sec) from L-serine and tRNA(Sec): step 1/1. Functionally, catalyzes the attachment of serine to tRNA(Ser). Is also able to aminoacylate tRNA(Sec) with serine, to form the misacylated tRNA L-seryl-tRNA(Sec), which will be further converted into selenocysteinyl-tRNA(Sec). This Ehrlichia ruminantium (strain Welgevonden) protein is Serine--tRNA ligase.